A 940-amino-acid chain; its full sequence is UvrABC system protein A (940 aa).

31 to 38 (GLSGSGKS) contacts ATP. A C4-type zinc finger spans residues 252–279 (CPHCGYSMQELEPRLFSFNNPAGACGTC). 2 consecutive ABC transporter domains span residues 309–586 (WDQK…PDSL) and 606–936 (RDKN…RFLK). ATP is bound at residue 639 to 646 (GVSGSGKS). The C4-type zinc-finger motif lies at 739–765 (CEACQGDGVIKVEMHFLPDVYVPCDVC).

The protein belongs to the ABC transporter superfamily. UvrA family. In terms of assembly, forms a heterotetramer with UvrB during the search for lesions.

It localises to the cytoplasm. Functionally, the UvrABC repair system catalyzes the recognition and processing of DNA lesions. UvrA is an ATPase and a DNA-binding protein. A damage recognition complex composed of 2 UvrA and 2 UvrB subunits scans DNA for abnormalities. When the presence of a lesion has been verified by UvrB, the UvrA molecules dissociate. This Vibrio vulnificus (strain YJ016) protein is UvrABC system protein A.